Reading from the N-terminus, the 61-residue chain is Sperm protamine P1 (61 aa).

Positions 1–61 (MARYRHSRSR…RRYSRRRRRY (61 aa)) are disordered.

It belongs to the protamine P1 family. Testis.

The protein resides in the nucleus. Its subcellular location is the chromosome. Protamines substitute for histones in the chromatin of sperm during the haploid phase of spermatogenesis. They compact sperm DNA into a highly condensed, stable and inactive complex. The sequence is that of Sperm protamine P1 (PRM1) from Potorous longipes (Long-footed potoroo).